The primary structure comprises 32 residues: Trypsin inhibitor 2b (32 aa).

3 disulfides stabilise this stretch: cysteine 3/cysteine 20, cysteine 10/cysteine 22, and cysteine 16/cysteine 29.

The protein belongs to the protease inhibitor I7 (squash-type serine protease inhibitor) family.

Its subcellular location is the secreted. Functionally, inhibits trypsin. The protein is Trypsin inhibitor 2b of Cucumis sativus (Cucumber).